The following is a 624-amino-acid chain: Vitamin B12 transporter BtuB (624 aa).

The signal sequence occupies residues 1–21 (MTIKKYTLLTALSVTAFSGWA). The TonB box signature appears at 31–38 (NEMVVTAN). Positions 43-157 (PKSSVLAPVD…IGGVVNIITE (115 aa)) constitute a TBDR plug domain. Residues leucine 88, serine 90, asparagine 97, and 115–116 (IS) each bind cyanocob(III)alamin. The 465-residue stretch at 160 to 624 (TLGSTLTAGL…EYYFTGSYNF (465 aa)) folds into the TBDR beta-barrel domain. 3 consecutive transmembrane segments (beta stranded) span residues 163 to 170 (STLTAGLG), 174 to 183 (YQNYNGSTQQ), and 189 to 200 (TTITLAGNYDYS). Ca(2+) is bound by residues aspartate 204, glutamine 216, aspartate 218, and aspartate 220. A run of 2 beta stranded transmembrane segments spans residues 222–232 (YLGKMLWLGAN) and 237–253 (EQFSGFVRGYGFDNRSD). The Ca(2+) site is built by tyrosine 254, aspartate 255, and aspartate 266. Beta stranded transmembrane passes span 268–282 (RSLSSRTYDTGINFS), 284–301 (GGYASQLIGSYSRTQDYN), 314–330 (TLDDISQYNLQWTNTYQ), 333–342 (LGNVGGGLDW), 358–374 (YEQRNTGVYGTVQQFVG), 376–386 (VTLEGAIRGDD), 390–405 (FGWHTTWQSSAGWEFV), 408–422 (YRLIGSYGTAFKAPN), 440–449 (ESTQWEAAIT), 455–464 (LDWRLSAYRN), 481–498 (YYNVEKATIKGVEWTGSF), 502–517 (PLSHQVTLEYLDPRNA), 525–537 (RRAKQQVKYQLDW), 543–557 (DWSVTYQYIGQRYDS), 568–582 (PVKLAGISLWDLAVS), 595–606 (IANLFDKDYEMV), and 612–624 (PGREYYFTGSYNF). Threonine 314 serves as a coordination point for cyanocob(III)alamin. Arginine 525 lines the cyanocob(III)alamin pocket. Residues 607–624 (YGYQTPGREYYFTGSYNF) carry the TonB C-terminal box motif.

This sequence belongs to the TonB-dependent receptor family. BtuB (TC 1.B.14.3.1) subfamily.

The protein localises to the cell outer membrane. Functionally, involved in the active translocation of vitamin B12 (cyanocobalamin) across the outer membrane to the periplasmic space. It derives its energy for transport by interacting with the trans-periplasmic membrane protein TonB. The protein is Vitamin B12 transporter BtuB of Yersinia pseudotuberculosis serotype O:1b (strain IP 31758).